Reading from the N-terminus, the 303-residue chain is MKNLLSMEALTVHEIEHLLEQAAQFKRGKKATFNEQTFAVNMFFEPSTRTHTSFEVAEKKLGVEVVSFDAASSSMTKGETLYDTLLTMQAVGVNVAVIRHSEENYYAGLEKLDIAIVNGGDGCGEHPSQSLLDLFTIKEQFGTFQGLKVAIAGDIRHSRVANSNMKVLKRLGAELFFSGPREWFDESYLAYGTYLSVDEIVEKVDVLMLLRVQHERHSGTDEFTKESYHEKFGLTENRAKQLKEDAIIMHPSPVNRDVEIADSLVESEKSRIVTQMTNGVFIRMAILEAILKEQEMRAKLCTY.

Carbamoyl phosphate is bound by residues arginine 49 and threonine 50. An L-aspartate-binding site is contributed by lysine 77. 3 residues coordinate carbamoyl phosphate: arginine 99, histidine 126, and glutamine 129. L-aspartate is bound by residues arginine 159 and arginine 211. Positions 252 and 253 each coordinate carbamoyl phosphate.

This sequence belongs to the aspartate/ornithine carbamoyltransferase superfamily. ATCase family. Heterododecamer (2C3:3R2) of six catalytic PyrB chains organized as two trimers (C3), and six regulatory PyrI chains organized as three dimers (R2).

It carries out the reaction carbamoyl phosphate + L-aspartate = N-carbamoyl-L-aspartate + phosphate + H(+). It functions in the pathway pyrimidine metabolism; UMP biosynthesis via de novo pathway; (S)-dihydroorotate from bicarbonate: step 2/3. In terms of biological role, catalyzes the condensation of carbamoyl phosphate and aspartate to form carbamoyl aspartate and inorganic phosphate, the committed step in the de novo pyrimidine nucleotide biosynthesis pathway. This Listeria monocytogenes serotype 4b (strain F2365) protein is Aspartate carbamoyltransferase catalytic subunit.